Consider the following 343-residue polypeptide: L-threonine 3-dehydrogenase (343 aa).

Cysteine 40 serves as a coordination point for Zn(2+). Active-site charge relay system residues include threonine 42 and histidine 45. The Zn(2+) site is built by histidine 65, glutamate 66, cysteine 95, cysteine 98, cysteine 101, and cysteine 109. Residues isoleucine 177, aspartate 197, arginine 202, leucine 264–isoleucine 266, and isoleucine 288–tyrosine 289 each bind NAD(+).

Belongs to the zinc-containing alcohol dehydrogenase family. As to quaternary structure, homotetramer. The cofactor is Zn(2+).

Its subcellular location is the cytoplasm. The enzyme catalyses L-threonine + NAD(+) = (2S)-2-amino-3-oxobutanoate + NADH + H(+). It functions in the pathway amino-acid degradation; L-threonine degradation via oxydo-reductase pathway; glycine from L-threonine: step 1/2. Its function is as follows. Catalyzes the NAD(+)-dependent oxidation of L-threonine to 2-amino-3-ketobutyrate. This is L-threonine 3-dehydrogenase from Vibrio parahaemolyticus serotype O3:K6 (strain RIMD 2210633).